Consider the following 361-residue polypeptide: Chorismate synthase (361 aa).

The segment covering 38–49 has biased composition (basic and acidic residues); the sequence is EKDMQHDLDRRR. The interval 38–58 is disordered; sequence EKDMQHDLDRRRPGTSKYTTQ. Arg48 serves as a coordination point for NADP(+). Residues 125 to 127, 238 to 239, Gly278, 293 to 297, and Arg319 contribute to the FMN site; these read RSS, NA, and KPTSS.

It belongs to the chorismate synthase family. In terms of assembly, homotetramer. Requires FMNH2 as cofactor.

The catalysed reaction is 5-O-(1-carboxyvinyl)-3-phosphoshikimate = chorismate + phosphate. Its pathway is metabolic intermediate biosynthesis; chorismate biosynthesis; chorismate from D-erythrose 4-phosphate and phosphoenolpyruvate: step 7/7. Its function is as follows. Catalyzes the anti-1,4-elimination of the C-3 phosphate and the C-6 proR hydrogen from 5-enolpyruvylshikimate-3-phosphate (EPSP) to yield chorismate, which is the branch point compound that serves as the starting substrate for the three terminal pathways of aromatic amino acid biosynthesis. This reaction introduces a second double bond into the aromatic ring system. The chain is Chorismate synthase from Photobacterium profundum (strain SS9).